A 256-amino-acid chain; its full sequence is Putative bidirectional sugar transporter SWEET7e (256 aa).

Residues 1 to 9 (MVSPDLIRN) are Extracellular-facing. Residues 10 to 30 (VVGIVGNAISFGLFLSPVLTF) traverse the membrane as a helical segment. Positions 10-97 (VVGIVGNAIS…TIFFLFSNKK (88 aa)) constitute a MtN3/slv 1 domain. The Cytoplasmic segment spans residues 31 to 45 (WRIIKEKDMKYFKAD). A helical membrane pass occupies residues 46 to 66 (PYLATLLNCMLWVFYGLPIVH). The Extracellular portion of the chain corresponds to 67–69 (PNS). Residues 70–90 (ILVVTINGIGLVIEAVYLTIF) form a helical membrane-spanning segment. Over 91 to 100 (FLFSNKKNKK) the chain is Cytoplasmic. A helical transmembrane segment spans residues 101-121 (MGVVLATEALFMAAVALGVLL). Over 122-130 (GAHTHQRRS) the chain is Extracellular. A helical membrane pass occupies residues 131–151 (LIVGILCVIFGTIMYSSPLTI). The MtN3/slv 2 domain maps to 133–212 (VGILCVIFGT…LMQLILDKNQ (80 aa)). Residues 152–164 (MSQVVKTKSVEYM) are Cytoplasmic-facing. A helical transmembrane segment spans residues 165-185 (PLLLSVVSFLNGLCWTSYALI). Arginine 186 is a topological domain (extracellular). Residues 187 to 207 (FDIFITIPNGLGVLFTLMQLI) traverse the membrane as a helical segment. At 208–256 (LDKNQDKNLELPTVAPVAKETSIVTPVSKDDDINGSTASHVIINITKEP) the chain is on the cytoplasmic side.

Belongs to the SWEET sugar transporter family. As to quaternary structure, forms homooligomers and/or heterooligomers.

Its subcellular location is the cell membrane. Its function is as follows. Mediates both low-affinity uptake and efflux of sugar across the plasma membrane. The chain is Putative bidirectional sugar transporter SWEET7e (SWEET7E) from Oryza sativa subsp. japonica (Rice).